The chain runs to 568 residues: Zinc finger protein 76 (568 aa).

A Glycyl lysine isopeptide (Lys-Gly) (interchain with G-Cter in SUMO2) cross-link involves residue lysine 24. 3 tandem repeats follow at residues 34–45 (IQLEDGTTAYIH), 62–73 (VQLEDGSMAYIH), and 88–99 (VQLEDGSTAYIH). The interval 34–99 (IQLEDGTTAY…LEDGSTAYIH (66 aa)) is 3 X 12 AA approximate repeats. C2H2-type zinc fingers lie at residues 165-189 (FRCGYKGCGRLYTTAHHLKVHERAH), 195-219 (YRCDFPSCGKAFATGYGLKSHVRTH), 225-249 (YKCPEELCSKAFKTSGDLQKHVRTH), 255-279 (FRCPFEGCGRSFTTSNIRKVHVRTH), 285-309 (YTCPEPHCGRGFTSATNYKNHVRIH), 315-339 (YVCTVPGCGKRFTEYSSLYKHHVVH), and 345-368 (YTCSSCGKTYRQTSTLAMHKRSAH). Residues 365 to 401 (RSAHGELEATEESEQALYEQQQLEAASAAEESPSPKP) are disordered. A compositionally biased stretch (low complexity) spans 379–396 (QALYEQQQLEAASAAEES).

This sequence belongs to the krueppel C2H2-type zinc-finger protein family.

The protein localises to the nucleus. Functionally, may be involved in transcriptional regulation. This Rattus norvegicus (Rat) protein is Zinc finger protein 76 (Znf76).